We begin with the raw amino-acid sequence, 208 residues long: Uracil phosphoribosyltransferase (208 aa).

5-phospho-alpha-D-ribose 1-diphosphate-binding positions include R77, R102, and 129–137 (DPMLATGNS). Uracil-binding positions include I193 and 198 to 200 (GDA). Position 199 (D199) interacts with 5-phospho-alpha-D-ribose 1-diphosphate.

It belongs to the UPRTase family. The cofactor is Mg(2+).

The catalysed reaction is UMP + diphosphate = 5-phospho-alpha-D-ribose 1-diphosphate + uracil. It participates in pyrimidine metabolism; UMP biosynthesis via salvage pathway; UMP from uracil: step 1/1. Allosterically activated by GTP. Its function is as follows. Catalyzes the conversion of uracil and 5-phospho-alpha-D-ribose 1-diphosphate (PRPP) to UMP and diphosphate. The sequence is that of Uracil phosphoribosyltransferase from Mycoplasmopsis agalactiae (strain NCTC 10123 / CIP 59.7 / PG2) (Mycoplasma agalactiae).